Reading from the N-terminus, the 81-residue chain is UPF0298 protein SAK_1599 (81 aa).

Belongs to the UPF0298 family.

Its subcellular location is the cytoplasm. The chain is UPF0298 protein SAK_1599 from Streptococcus agalactiae serotype Ia (strain ATCC 27591 / A909 / CDC SS700).